Reading from the N-terminus, the 465-residue chain is Ribosomal oxygenase 2 (465 aa).

Positions 139 to 271 (QPQRFKDELW…NSWGDFLLDT (133 aa)) constitute a JmjC domain. Residues histidine 179, aspartate 181, and histidine 240 each contribute to the Fe cation site. Position 309 is a phosphoserine (serine 309).

Belongs to the ROX family. MINA53 subfamily. It depends on Fe(2+) as a cofactor.

Its subcellular location is the nucleus. The protein resides in the nucleolus. The catalysed reaction is L-histidyl-[ribosomal protein uL15] + 2-oxoglutarate + O2 = (3S)-3-hydroxy-L-histidyl-[ribosomal protein uL15] + succinate + CO2. The enzyme catalyses L-histidyl-[protein] + 2-oxoglutarate + O2 = (3S)-3-hydroxy-L-histidyl-[protein] + succinate + CO2. In terms of biological role, oxygenase that can act as both a histone lysine demethylase and a ribosomal histidine hydroxylase. Is involved in the demethylation of trimethylated 'Lys-9' on histone H3 (H3K9me3), leading to an increase in ribosomal RNA expression. Also catalyzes the hydroxylation of 60S ribosomal protein L27a on 'His-39'. May play an important role in cell growth and survival. May be involved in ribosome biogenesis, most likely during the assembly process of pre-ribosomal particles. This Pongo abelii (Sumatran orangutan) protein is Ribosomal oxygenase 2 (RIOX2).